The following is a 113-amino-acid chain: U11-theraphotoxin-Hhn1a (113 aa).

Positions 1-21 (MNTVRVTFLLVFVLAVSLGQA) are cleaved as a signal peptide. Residues 22-74 (DKDENRMVMQEKTEQGKSYLDFAENLLLQKLEELEAKLLEEDSEESRNSRQKR) constitute a propeptide that is removed on maturation. Intrachain disulfides connect Cys75-Cys90, Cys82-Cys95, and Cys89-Cys110.

It belongs to the neurotoxin 14 (magi-1) family. 01 (HNTX-16) subfamily. As to expression, expressed by the venom gland.

The protein localises to the secreted. Probable ion channel inhibitor. This Cyriopagopus hainanus (Chinese bird spider) protein is U11-theraphotoxin-Hhn1a.